Reading from the N-terminus, the 347-residue chain is Protease HtpX homolog (347 aa).

Helical transmembrane passes span 8 to 28 (VALG…ATIA), 44 to 64 (AMAL…YLFV), 76 to 96 (LSFL…TYFA), and 141 to 163 (AFAY…LALT). A Zn(2+)-binding site is contributed by His174. Residue Glu175 is part of the active site. His178 is a Zn(2+) binding site. The next 2 helical transmembrane spans lie at 185–205 (AIML…VTAV) and 221–241 (ILAA…LLVL). Zn(2+) is bound at residue Glu248.

This sequence belongs to the peptidase M48B family. It depends on Zn(2+) as a cofactor.

The protein resides in the cell membrane. The polypeptide is Protease HtpX homolog (Pyrobaculum aerophilum (strain ATCC 51768 / DSM 7523 / JCM 9630 / CIP 104966 / NBRC 100827 / IM2)).